A 100-amino-acid chain; its full sequence is Aspartyl/glutamyl-tRNA(Asn/Gln) amidotransferase subunit C (100 aa).

This sequence belongs to the GatC family. In terms of assembly, heterotrimer of A, B and C subunits.

The catalysed reaction is L-glutamyl-tRNA(Gln) + L-glutamine + ATP + H2O = L-glutaminyl-tRNA(Gln) + L-glutamate + ADP + phosphate + H(+). It carries out the reaction L-aspartyl-tRNA(Asn) + L-glutamine + ATP + H2O = L-asparaginyl-tRNA(Asn) + L-glutamate + ADP + phosphate + 2 H(+). In terms of biological role, allows the formation of correctly charged Asn-tRNA(Asn) or Gln-tRNA(Gln) through the transamidation of misacylated Asp-tRNA(Asn) or Glu-tRNA(Gln) in organisms which lack either or both of asparaginyl-tRNA or glutaminyl-tRNA synthetases. The reaction takes place in the presence of glutamine and ATP through an activated phospho-Asp-tRNA(Asn) or phospho-Glu-tRNA(Gln). In Staphylococcus epidermidis (strain ATCC 35984 / DSM 28319 / BCRC 17069 / CCUG 31568 / BM 3577 / RP62A), this protein is Aspartyl/glutamyl-tRNA(Asn/Gln) amidotransferase subunit C.